The primary structure comprises 219 residues: PRELI domain-containing protein 1, mitochondrial (219 aa).

The PRELI/MSF1 domain occupies 36 to 174; that stretch reads TEDIVHREVT…ILAKLQGEAP (139 aa).

As to quaternary structure, forms a complex with TRIAP1 in the mitochondrion intermembrane space. Interacts with OPA1 and AIFM1. Highly expressed in fetal liver; less expressed in fetal brain, lung, and kidney. At the adult stage, expression is drastically reduced in the liver but highly expressed in the spleen, brain, lung, lymph nodes and peripheral blood leukocytes.

The protein resides in the mitochondrion. The protein localises to the mitochondrion intermembrane space. It carries out the reaction a 1,2-diacyl-sn-glycero-3-phosphate(in) = a 1,2-diacyl-sn-glycero-3-phosphate(out). Its function is as follows. Involved in the modulation of the mitochondrial apoptotic pathway by ensuring the accumulation of cardiolipin (CL) in mitochondrial membranes. In vitro, the TRIAP1:PRELID1 complex mediates the transfer of phosphatidic acid (PA) between liposomes and probably functions as a PA transporter across the mitochondrion intermembrane space to provide PA for CL synthesis in the inner membrane. Regulates the mitochondrial apoptotic pathway in primary Th cells. Regulates Th cell differentiation by down-regulating STAT6 thereby reducing IL-4-induced Th2 cell number. May be important for the development of vital and immunocompetent organs. This is PRELI domain-containing protein 1, mitochondrial (PRELID1) from Homo sapiens (Human).